Reading from the N-terminus, the 133-residue chain is Profilin-4 (133 aa).

Cys-13 and Cys-117 are disulfide-bonded. Residues 83-99 (AVIRGKKGSGGITIKKT) carry the Involved in PIP2 interaction motif. The residue at position 113 (Thr-113) is a Phosphothreonine.

This sequence belongs to the profilin family. In terms of assembly, occurs in many kinds of cells as a complex with monomeric actin in a 1:1 ratio. In terms of processing, phosphorylated by MAP kinases.

The protein resides in the cytoplasm. Its subcellular location is the cytoskeleton. Its function is as follows. Binds to actin and affects the structure of the cytoskeleton. At high concentrations, profilin prevents the polymerization of actin, whereas it enhances it at low concentrations. The sequence is that of Profilin-4 from Corylus avellana (European hazel).